A 514-amino-acid chain; its full sequence is Type-2 serine--tRNA ligase (514 aa).

Ala-313 lines the L-serine pocket. Cys-315 contacts Zn(2+). Arg-344 is an L-serine binding site. ATP contacts are provided by residues Arg-344–Glu-346 and Arg-355–Val-356. Position 361–363 (Arg-361–Glu-363) interacts with L-serine. The Zn(2+) site is built by Glu-363 and Cys-470. Arg-477 contributes to the ATP binding site.

Belongs to the class-II aminoacyl-tRNA synthetase family. Type-2 seryl-tRNA synthetase subfamily. As to quaternary structure, homodimer. Requires Zn(2+) as cofactor.

Its subcellular location is the cytoplasm. It catalyses the reaction tRNA(Ser) + L-serine + ATP = L-seryl-tRNA(Ser) + AMP + diphosphate + H(+). The catalysed reaction is tRNA(Sec) + L-serine + ATP = L-seryl-tRNA(Sec) + AMP + diphosphate + H(+). The protein operates within aminoacyl-tRNA biosynthesis; selenocysteinyl-tRNA(Sec) biosynthesis; L-seryl-tRNA(Sec) from L-serine and tRNA(Sec): step 1/1. Its function is as follows. Catalyzes the attachment of serine to tRNA(Ser). Is also able to aminoacylate tRNA(Sec) with serine, to form the misacylated tRNA L-seryl-tRNA(Sec), which will be further converted into selenocysteinyl-tRNA(Sec). This is Type-2 serine--tRNA ligase from Methanococcus maripaludis (strain C6 / ATCC BAA-1332).